Consider the following 307-residue polypeptide: uncharacterized protein (307 aa).

This is an uncharacterized protein from Archaeoglobus fulgidus (strain ATCC 49558 / DSM 4304 / JCM 9628 / NBRC 100126 / VC-16).